Here is a 199-residue protein sequence, read N- to C-terminus: Pyridoxine/pyridoxamine 5'-phosphate oxidase (199 aa).

FMN contacts are provided by residues 45-50 (RVVLLK), 60-61 (FT), arginine 66, lysine 67, and glutamine 89. Lysine 50 contacts substrate. Residues tyrosine 107, arginine 111, and serine 115 each contribute to the substrate site. FMN-binding positions include 124–125 (QS) and tryptophan 169. Residue 175-177 (RIH) participates in substrate binding. Arginine 179 contributes to the FMN binding site.

The protein belongs to the pyridoxamine 5'-phosphate oxidase family. Homodimer. FMN is required as a cofactor.

It catalyses the reaction pyridoxamine 5'-phosphate + O2 + H2O = pyridoxal 5'-phosphate + H2O2 + NH4(+). The catalysed reaction is pyridoxine 5'-phosphate + O2 = pyridoxal 5'-phosphate + H2O2. Its pathway is cofactor metabolism; pyridoxal 5'-phosphate salvage; pyridoxal 5'-phosphate from pyridoxamine 5'-phosphate: step 1/1. It participates in cofactor metabolism; pyridoxal 5'-phosphate salvage; pyridoxal 5'-phosphate from pyridoxine 5'-phosphate: step 1/1. Functionally, catalyzes the oxidation of either pyridoxine 5'-phosphate (PNP) or pyridoxamine 5'-phosphate (PMP) into pyridoxal 5'-phosphate (PLP). This Ehrlichia chaffeensis (strain ATCC CRL-10679 / Arkansas) protein is Pyridoxine/pyridoxamine 5'-phosphate oxidase.